The primary structure comprises 187 residues: GTP cyclohydrolase 1 (187 aa).

Cys79, His82, and Cys150 together coordinate Zn(2+).

It belongs to the GTP cyclohydrolase I family. As to quaternary structure, toroid-shaped homodecamer, composed of two pentamers of five dimers.

The catalysed reaction is GTP + H2O = 7,8-dihydroneopterin 3'-triphosphate + formate + H(+). Its pathway is cofactor biosynthesis; 7,8-dihydroneopterin triphosphate biosynthesis; 7,8-dihydroneopterin triphosphate from GTP: step 1/1. This Fusobacterium nucleatum subsp. nucleatum (strain ATCC 25586 / DSM 15643 / BCRC 10681 / CIP 101130 / JCM 8532 / KCTC 2640 / LMG 13131 / VPI 4355) protein is GTP cyclohydrolase 1.